We begin with the raw amino-acid sequence, 136 residues long: Peptide deformylase (136 aa).

Fe cation is bound by residues cysteine 85 and histidine 126. Glutamate 127 is a catalytic residue. Residue histidine 130 coordinates Fe cation.

Belongs to the polypeptide deformylase family. Requires Fe(2+) as cofactor.

It carries out the reaction N-terminal N-formyl-L-methionyl-[peptide] + H2O = N-terminal L-methionyl-[peptide] + formate. In terms of biological role, removes the formyl group from the N-terminal Met of newly synthesized proteins. Requires at least a dipeptide for an efficient rate of reaction. N-terminal L-methionine is a prerequisite for activity but the enzyme has broad specificity at other positions. This Clostridium beijerinckii (strain ATCC 51743 / NCIMB 8052) (Clostridium acetobutylicum) protein is Peptide deformylase.